A 539-amino-acid polypeptide reads, in one-letter code: MKTIGEFNAAHGPEAIGLTDLAAVHWNLEAPRLYEEALRRNEAQLARGGALVATTGSHTGRSPKDKYVVRDAGTENEIWWDNNGSITPDQFATLLDDFRAHARGKELFAQDLFGGADPAHRVRARVYTELAWHSLFIRNLLIRPERADLAAYVPELTIIDLPSFQADPARHGCRSKTVIAIDFSQKIVLIGGSAYAGEMKKSVFTYLNYVLPGTGVMPMHCSANASLDETGDSALFFGLSGTGKTTLSNDSSRQLIGDDEHGWSRDGIFNFEGGCYAKTIRLSRNAEPEIYATTERFGTVMENVVIDPLTRVPDFDDASLTENTRCAYPLDFIANASATGRAGHPKNIVMLTCDAFGVMPPIAKLTGAEAMYHFLSGYTAKVAGTERGLTAPEATFSTCFGAPFMPRHPSVYGNLLRELMAEHGVDCWLVNTGWTGGGVGTGRRMPIRVTRRLLSAALDGSLAQVEFRRDPYFGFSVPVEVPGVETQVLSPVETWTNKAAFADTATRLVTMFRENFKRFESHVDADVRAAEPVAAAIAA.

Residues Arg-61, Tyr-195, and Lys-201 each contribute to the substrate site. Residues Lys-201, His-220, and 238-246 (GLSGTGKTT) each bind ATP. Mn(2+)-binding residues include Lys-201 and His-220. Asp-259 contacts Mn(2+). ATP-binding residues include Glu-287, Arg-325, and Thr-450. Arg-325 serves as a coordination point for substrate.

Belongs to the phosphoenolpyruvate carboxykinase (ATP) family. Mn(2+) serves as cofactor.

The protein resides in the cytoplasm. The enzyme catalyses oxaloacetate + ATP = phosphoenolpyruvate + ADP + CO2. It participates in carbohydrate biosynthesis; gluconeogenesis. Functionally, involved in the gluconeogenesis. Catalyzes the conversion of oxaloacetate (OAA) to phosphoenolpyruvate (PEP) through direct phosphoryl transfer between the nucleoside triphosphate and OAA. The sequence is that of Phosphoenolpyruvate carboxykinase (ATP) from Methylorubrum extorquens (strain CM4 / NCIMB 13688) (Methylobacterium extorquens).